A 426-amino-acid chain; its full sequence is Protein PHOSPHATE STARVATION RESPONSE 2 (426 aa).

3 disordered regions span residues Ala27–Ser81, Tyr96–Gly123, and Thr198–Thr247. Polar residues predominate over residues Phe69–Ser81. 2 stretches are compositionally biased toward low complexity: residues Tyr102–Ser119 and Ala205–Ser225. The segment covering Ser237 to Lys246 has biased composition (polar residues). One can recognise an HTH myb-type domain in the interval Ser243 to Tyr303. The H-T-H motif DNA-binding region spans Pro274–Arg299. Disordered stretches follow at residues Arg302–Asp326 and Asp382–Arg426. Positions Tyr303–Ile322 are enriched in basic and acidic residues. Composition is skewed to polar residues over residues Ala387 to Pro401 and Glu411 to Arg426.

As to quaternary structure, interacts (via C-terminus) with SPX4 (via N-terminus) in the presence of inositol polyphosphate. Interacts (via C-terminus) with SPX1 and SPX2 (via SPX domain). Interacts with RLI1 in the nucleus.

It is found in the nucleus. The protein resides in the cytoplasm. Functionally, transcription factor involved in phosphate starvation signaling. Binds to P1BS, an imperfect palindromic sequence 5'-GNATATNC-3', to promote the expression of inorganic phosphate (Pi) starvation-responsive genes. Functionally redundant with PHR1 and PHR3 in regulating Pi starvation response and Pi homeostasis. Involved in both systematic and local Pi-signaling pathways. Regulates several Pi transporters. PHR2 binding to DNA is repressed redundantly by SPX1, SPX2 and SPX4 in a PI-dependent manner. The DNA-binding activity is also repressed by SPX4. Involved in root growth under Pi deprivation. Involved in the modulation of Pi response and homeostasis together with RLI1; promotes RLI1 expression in response to nitrate availability, thus triggering the nitrate-induced phosphate response (NIPR). The sequence is that of Protein PHOSPHATE STARVATION RESPONSE 2 from Oryza sativa subsp. indica (Rice).